We begin with the raw amino-acid sequence, 469 residues long: 3-isopropylmalate dehydratase large subunit (469 aa).

[4Fe-4S] cluster contacts are provided by Cys349, Cys409, and Cys412.

This sequence belongs to the aconitase/IPM isomerase family. LeuC type 1 subfamily. In terms of assembly, heterodimer of LeuC and LeuD. The cofactor is [4Fe-4S] cluster.

It carries out the reaction (2R,3S)-3-isopropylmalate = (2S)-2-isopropylmalate. Its pathway is amino-acid biosynthesis; L-leucine biosynthesis; L-leucine from 3-methyl-2-oxobutanoate: step 2/4. Functionally, catalyzes the isomerization between 2-isopropylmalate and 3-isopropylmalate, via the formation of 2-isopropylmaleate. This is 3-isopropylmalate dehydratase large subunit from Methylorubrum extorquens (strain CM4 / NCIMB 13688) (Methylobacterium extorquens).